A 428-amino-acid polypeptide reads, in one-letter code: MQELHLLWWALLLGLAQACPEPCDCGEKYGFQIADCAYRDLESVPPGFPANVTTLSLSANRLPGLPEGAFREVPLLQSLWLAHNEIRTVAAGALASLSHLKSLDLSHNLISDFAWSDLHNLSALQLLKMDSNELTFIPRDAFRSLRALRSLQLNHNRLHTLAEGTFTPLTALSHLQINENPFDCTCGIVWLKTWALTTAVSIPEQDNIACTSPHVLKGTPLSRLPPLPCSAPSVQLSYQPSQDGAELRPGFVLALHCDVDGQPAPQLHWHIQIPSGIVEITSPNVGTDGRALPGTPVASSQPRFQAFANGSLLIPDFGKLEEGTYSCLATNELGSAESSVDVALATPGEGGEDTLGRRFHGKAVEGKGCYTVDNEVQPSGPEDNVVIIYLSRAGNPEAAVAEGVPGQLPPGLLLLGQSLLLFFFLTSF.

The first 18 residues, 1–18 (MQELHLLWWALLLGLAQA), serve as a signal peptide directing secretion. The 32-residue stretch at 19–50 (CPEPCDCGEKYGFQIADCAYRDLESVPPGFPA) folds into the LRRNT domain. Asparagine 51 is a glycosylation site (N-linked (GlcNAc...) asparagine). LRR repeat units follow at residues 51–72 (NVTTLSLSANRLPGLPEGAFRE), 75–96 (LLQSLWLAHNEIRTVAAGALAS), 99–122 (HLKSLDLSHNLISDFAWSDLHNLS), 123–144 (ALQLLKMDSNELTFIPRDAFRS), and 147–168 (ALRSLQLNHNRLHTLAEGTFTP). Residues 180-231 (NPFDCTCGIVWLKTWALTTAVSIPEQDNIACTSPHVLKGTPLSRLPPLPCSA) enclose the LRRCT domain. The region spanning 232-343 (PSVQLSYQPS…GSAESSVDVA (112 aa)) is the Ig-like domain. Cysteine 257 and cysteine 327 form a disulfide bridge. N-linked (GlcNAc...) asparagine glycosylation is present at asparagine 309.

As to expression, expressed in various tissues including retina, heart, skeletal muscle, prostate, ovary, small intestine, thyroid, adrenal cortex, testis, stomach and spinal cord.

The protein resides in the secreted. This is Immunoglobulin superfamily containing leucine-rich repeat protein (ISLR) from Homo sapiens (Human).